The following is a 418-amino-acid chain: Fumarylacetoacetase (418 aa).

Position 127 (aspartate 127) interacts with Ca(2+). The active-site Proton acceptor is histidine 134. Positions 200, 202, and 235 each coordinate Ca(2+). Mg(2+) contacts are provided by aspartate 235, lysine 255, and threonine 259.

Belongs to the FAH family. Ca(2+) serves as cofactor. It depends on Mg(2+) as a cofactor. In terms of tissue distribution, highly expressed in the intestine and the hypodermis.

The catalysed reaction is 4-fumarylacetoacetate + H2O = acetoacetate + fumarate + H(+). It participates in amino-acid degradation; L-phenylalanine degradation; acetoacetate and fumarate from L-phenylalanine: step 6/6. Fumarylacetoacetase involved in the tyrosine degradation pathway. In Caenorhabditis elegans, this protein is Fumarylacetoacetase.